Consider the following 283-residue polypeptide: Ribosomal RNA small subunit methyltransferase H (283 aa).

S-adenosyl-L-methionine-binding positions include 31 to 33 (GGH), D50, F77, D93, and Q100.

This sequence belongs to the methyltransferase superfamily. RsmH family.

It is found in the cytoplasm. It carries out the reaction cytidine(1402) in 16S rRNA + S-adenosyl-L-methionine = N(4)-methylcytidine(1402) in 16S rRNA + S-adenosyl-L-homocysteine + H(+). Specifically methylates the N4 position of cytidine in position 1402 (C1402) of 16S rRNA. This is Ribosomal RNA small subunit methyltransferase H from Trichodesmium erythraeum (strain IMS101).